The primary structure comprises 276 residues: Undecaprenyl-diphosphatase (276 aa).

The next 7 membrane-spanning stretches (helical) occupy residues 40-60, 98-118, 121-141, 155-175, 200-220, 227-247, and 255-275; these read GLAF…TFFW, WLII…KDAI, IFRG…VLYY, MSFK…FPGI, FLLS…DIAT, VLLA…KLLM, and LDIF…LSVV.

It belongs to the UppP family.

The protein resides in the cell membrane. It carries out the reaction di-trans,octa-cis-undecaprenyl diphosphate + H2O = di-trans,octa-cis-undecaprenyl phosphate + phosphate + H(+). In terms of biological role, catalyzes the dephosphorylation of undecaprenyl diphosphate (UPP). In Methanosphaera stadtmanae (strain ATCC 43021 / DSM 3091 / JCM 11832 / MCB-3), this protein is Undecaprenyl-diphosphatase.